Consider the following 494-residue polypeptide: MKTFTITVKKTEGFKKFEVPVGLTILDALEYINKTYGENIQFRSSCKAGQCGSCAVMINKKSKLACKTKVEDNMIIEPLEGFDVISDLVVDREPYYKKIGTLRNYIQKKNEKISEKELDGLKLYPDDLKDVKKIRGCIDCLSCIAMCPARKYSNYPGPTLMRQLARFAFDPKDEIDREKEAFDENIYNCTTCGRCVEVCPKEIDIVHNAVEKLREKTFKKGYNLDSHLEVRKNVLSQNRSVPKEKTSFLEEVSDEYIVENEKMRVAFFTGCLVDFRLQEIGKSAIRVLNAHGVSVIIPKNQVCCGSPFIRTGQTDISESLKKQNLEIFNKLNVDSVVTLCAGCGSTLKNDYKEKKFKVMDITEVLVKVGLIDYKPLDITVTYHDPCHLRRGQKVYLEPRKILESIPKLKFIEMEIPDQCCGAGGGVRSGKPEVAEAIGKRKANMIYATDADYLITVCPFCEYHIRDSLTKYLKEHGLKKDIPVMNIISLLDKVI.

A 2Fe-2S ferredoxin-type domain is found at 4–82 (FTITVKKTEG…NMIIEPLEGF (79 aa)). Residues C46, C51, C54, and C66 each coordinate [2Fe-2S] cluster. 2 consecutive 4Fe-4S ferredoxin-type domains span residues 127 to 157 (DLKDVKKIRGCIDCLSCIAMCPARKYSNYPG) and 178 to 208 (EKEAFDENIYNCTTCGRCVEVCPKEIDIVHN). [4Fe-4S] cluster-binding residues include C137, C140, C143, C147, C189, C192, C195, and C199.

The protein belongs to the succinate dehydrogenase/fumarate reductase iron-sulfur protein family.

This is an uncharacterized protein from Methanococcus maripaludis (strain DSM 14266 / JCM 13030 / NBRC 101832 / S2 / LL).